Consider the following 894-residue polypeptide: Histone-lysine N-methyltransferase EZ2 (894 aa).

Positions 1 to 11 are enriched in low complexity; the sequence is MASSSKASDSS. 3 disordered regions span residues 1-25, 395-447, and 491-513; these read MASS…GKDA, SSVS…KRQK, and KKTS…VGRQ. Over residues 395-421 the composition is skewed to polar residues; that stretch reads SSVSAEESTTTPSADISETENVSSDLP. Residues 425-435 are compositionally biased toward basic residues; the sequence is LRKHKISKHGP. The segment covering 503-513 has biased composition (polar residues); that stretch reads PATTMENVGRQ. The SANT domain maps to 527-577; it reads TLSCWSALERDLYLKGIEIFGKNSCLIARNLLSGLKTCIEVANYMYNNGAA. Positions 627-731 constitute a CXC domain; that stretch reads AGHPTVRKRT…SLGEPLARGD (105 aa). The 116-residue stretch at 746 to 861 folds into the SET domain; the sequence is QRILLGRSDV…ASEELFYDYR (116 aa). The disordered stretch occupies residues 867–894; it reads APAWARRPEGSKKDEASVSHRRAHKVAR. Residues 872–884 are compositionally biased toward basic and acidic residues; it reads RRPEGSKKDEASV. Over residues 885–894 the composition is skewed to basic residues; that stretch reads SHRRAHKVAR.

The protein belongs to the class V-like SAM-binding methyltransferase superfamily. Histone-lysine methyltransferase family. EZ subfamily.

Its subcellular location is the nucleus. It carries out the reaction L-lysyl(27)-[histone H3] + 3 S-adenosyl-L-methionine = N(6),N(6),N(6)-trimethyl-L-lysyl(27)-[histone H3] + 3 S-adenosyl-L-homocysteine + 3 H(+). In terms of biological role, polycomb group (PcG) protein. Catalytic subunit of some PcG multiprotein complex, which methylates 'Lys-27' of histone H3, leading to transcriptional repression of the affected target genes. PcG proteins are not required to initiate repression, but to maintain it during later stages of development. The sequence is that of Histone-lysine N-methyltransferase EZ2 (EZ2) from Zea mays (Maize).